Reading from the N-terminus, the 459-residue chain is tRNA modification GTPase MnmE (459 aa).

Residues Arg22, Glu85, and Arg124 each coordinate (6S)-5-formyl-5,6,7,8-tetrahydrofolate. A TrmE-type G domain is found at 221–380 (GLSTVIVGKP…LEIQIRDLFF (160 aa)). Residue Asn231 participates in K(+) binding. Residues 231–236 (NVGKSS), 250–256 (TEVAGTT), and 275–278 (DTAG) each bind GTP. Ser235 serves as a coordination point for Mg(2+). K(+) is bound by residues Thr250, Val252, and Thr255. Thr256 provides a ligand contact to Mg(2+). Lys459 is a binding site for (6S)-5-formyl-5,6,7,8-tetrahydrofolate.

The protein belongs to the TRAFAC class TrmE-Era-EngA-EngB-Septin-like GTPase superfamily. TrmE GTPase family. In terms of assembly, homodimer. Heterotetramer of two MnmE and two MnmG subunits. K(+) serves as cofactor.

It localises to the cytoplasm. Functionally, exhibits a very high intrinsic GTPase hydrolysis rate. Involved in the addition of a carboxymethylaminomethyl (cmnm) group at the wobble position (U34) of certain tRNAs, forming tRNA-cmnm(5)s(2)U34. This chain is tRNA modification GTPase MnmE, found in Staphylococcus aureus (strain bovine RF122 / ET3-1).